A 499-amino-acid polypeptide reads, in one-letter code: D-alanine--D-alanyl carrier protein ligase (499 aa).

An ATP-binding site is contributed by 152 to 153 (TS). Asp197 contacts D-alanine. ATP contacts are provided by residues 292–297 (NTYGPT), Asp372, 384–387 (YQGR), and Lys485. Lys485 contacts D-alanine.

This sequence belongs to the ATP-dependent AMP-binding enzyme family. DltA subfamily.

It is found in the cytoplasm. The catalysed reaction is holo-[D-alanyl-carrier protein] + D-alanine + ATP = D-alanyl-[D-alanyl-carrier protein] + AMP + diphosphate. The protein operates within cell wall biogenesis; lipoteichoic acid biosynthesis. Functionally, catalyzes the first step in the D-alanylation of lipoteichoic acid (LTA), the activation of D-alanine and its transfer onto the D-alanyl carrier protein (Dcp) DltC. In an ATP-dependent two-step reaction, forms a high energy D-alanyl-AMP intermediate, followed by transfer of the D-alanyl residue as a thiol ester to the phosphopantheinyl prosthetic group of the Dcp. D-alanylation of LTA plays an important role in modulating the properties of the cell wall in Gram-positive bacteria, influencing the net charge of the cell wall. In Lactococcus lactis subsp. lactis (strain IL1403) (Streptococcus lactis), this protein is D-alanine--D-alanyl carrier protein ligase.